Reading from the N-terminus, the 331-residue chain is Tetraacyldisaccharide 4'-kinase (331 aa).

ATP is bound at residue 55-62; it reads TAGGNGKT.

Belongs to the LpxK family.

It catalyses the reaction a lipid A disaccharide + ATP = a lipid IVA + ADP + H(+). The protein operates within glycolipid biosynthesis; lipid IV(A) biosynthesis; lipid IV(A) from (3R)-3-hydroxytetradecanoyl-[acyl-carrier-protein] and UDP-N-acetyl-alpha-D-glucosamine: step 6/6. Its function is as follows. Transfers the gamma-phosphate of ATP to the 4'-position of a tetraacyldisaccharide 1-phosphate intermediate (termed DS-1-P) to form tetraacyldisaccharide 1,4'-bis-phosphate (lipid IVA). This is Tetraacyldisaccharide 4'-kinase from Edwardsiella ictaluri (strain 93-146).